Here is a 479-residue protein sequence, read N- to C-terminus: Endosomal/lysosomal proton channel TMEM175 (479 aa).

The tract at residues 1–26 is disordered; sequence MSGPQAPEPTLEGQADASAGSPDEDA. The Cytoplasmic portion of the chain corresponds to 1-33; that stretch reads MSGPQAPEPTLEGQADASAGSPDEDAAEGIQHS. A helical membrane pass occupies residues 34 to 56; sequence HRMLSFSDALLSIIATVMEFDKS. The RxxxFSD motif 1 signature appears at 35–41; it reads RMLSFSD. Residues 52–58 form a short helix H2-1 region; that stretch reads EFDKSVQ. Residues 57–64 are Lumenal-facing; the sequence is VQRLLATR. The chain crosses the membrane as a helical span at residues 65-87; sequence IAVYLMTFLIVTVAWAAHTRLFQ. Residues 88–93 are Cytoplasmic-facing; it reads VVGKID. The chain crosses the membrane as a helical span at residues 94 to 103; it reads DTLALLNLFS. The Lumenal portion of the chain corresponds to 104–113; it reads LMVTFPEVPL. Residues 114-135 form a helical membrane-spanning segment; that stretch reads GIFLFCMCVIAIGAVQALIVLY. Topologically, residues 136–159 are cytoplasmic; that stretch reads AFHFPHLLSPQIERSAHRGLYRQR. A helical membrane pass occupies residues 160–180; sequence VLGIIVRGPALCLAAAGFSLF. Topologically, residues 181-185 are lumenal; it reads FYPAS. The chain crosses the membrane as a helical span at residues 186-205; it reads YLLMAMVIVLPHVSKAAGWC. The Cytoplasmic segment spans residues 206–232; that stretch reads RAQLVGPREPPAHSVEVFTFDLHEPLS. The helical transmembrane segment at 233–257 threads the bilayer; it reads KERVEAFSDGVYAIVATLLILDICE. Residues 235-241 carry the RxxxFSD motif 2 motif; sequence RVEAFSD. Topologically, residues 258-284 are lumenal; sequence DNVPDAKDVKEKFQGSLVAALGESGPH. Residues 263-271 are short helix H1-2; sequence AKDVKEKFQ. The interval 273-279 is short helix H2-2; the sequence is SLVAALG. Residues 285–307 form a helical membrane-spanning segment; sequence FLAYFGSFATVGLLWFAHHSLFL. Over 308–313 the chain is Cytoplasmic; the sequence is HIRRAT. Residues 314–335 traverse the membrane as a helical segment; that stretch reads QPMGLLNTLSLAFVGGLPLAYQ. At 336–350 the chain is on the lumenal side; the sequence is QTSAFTKQPRDELES. Residues 351–371 form a helical membrane-spanning segment; sequence VRISCAIIFLASIFQFAIWTT. Topologically, residues 372 to 391 are cytoplasmic; sequence ALLQEGETLQPSARFGGREH. The helical transmembrane segment at 392 to 415 threads the bilayer; the sequence is AFMFAKLALYPCASLLAFACTCVL. At 416–417 the chain is on the lumenal side; sequence SS. Residues 418–444 traverse the membrane as a helical segment; it reads FSTAIFHAMQIAVPFAFLLLRLLVRLA. Topologically, residues 445-479 are cytoplasmic; sequence LAGLRALRGLVGPVLARPAPGAADEAQSPLLPAPC.

This sequence belongs to the TMEM175 family. As to quaternary structure, homodimer. Interacts with AKT (AKT1, AKT2 or AKT3); leading to formation of the lysoK(GF) complex, which activates the channel. Interacts with LAMP1; inhibiting the proton channel activity of TMEM175. Interacts with LAMP2; inhibiting the proton channel activity of TMEM175.

It localises to the endosome membrane. It is found in the lysosome membrane. It carries out the reaction H(+)(in) = H(+)(out). The enzyme catalyses K(+)(in) = K(+)(out). With respect to regulation, active at low pH (under pH 4.6): proton channel activity is activated by luminal side protons. Polyunsaturated fatty acids, such as arachidonic acid, also activate the channel activity. Proton channel activity is directly inhibited by LAMP1 or LAMP2, facilitating lysosomal acidification. Channel activity is activated following interaction with AKT (AKT1, AKT2 or AKT3): interaction promotes activation from closed to an open state. Activation by AKT is independent of AKT serine/threonine-protein kinase activity. Its function is as follows. Proton-activated proton channel that catalyzes proton efflux from endosomes and lysosomes to maintain a steady-state pH. Activated at low pH (under pH 4.6) by luminal side protons: selectively mediates lysosomal proton release from lysosomes, eliciting a proton leak that balances V-ATPase activity to maintain pH homeostasis. Regulation of lumenal pH stability is required for autophagosome-lysosome fusion. Also acts as a potassium channel at higher pH, regulating potassium conductance in endosomes and lysosomes. Constitutes the pore-forming subunit of the lysoK(GF) complex, a complex activated by extracellular growth factors. The lysoK(GF) complex is composed of TMEM175 and AKT (AKT1, AKT2 or AKT3), a major target of growth factor receptors: in the complex, TMEM175 channel is opened by conformational changes by AKT, leading to its activation. The lysoK(GF) complex is required to protect neurons against stress-induced damage. The sequence is that of Endosomal/lysosomal proton channel TMEM175 from Bos taurus (Bovine).